Reading from the N-terminus, the 396-residue chain is 1-deoxy-D-xylulose 5-phosphate reductoisomerase (396 aa).

NADPH contacts are provided by T10, G11, S12, I13, G36, K37, N38, and N124. Residue K125 participates in 1-deoxy-D-xylulose 5-phosphate binding. Position 126 (E126) interacts with NADPH. D150 serves as a coordination point for Mn(2+). Residues S151, E152, S186, and H209 each coordinate 1-deoxy-D-xylulose 5-phosphate. E152 provides a ligand contact to Mn(2+). G215 is an NADPH binding site. 1-deoxy-D-xylulose 5-phosphate is bound by residues S222, N227, K228, and E231. E231 is a binding site for Mn(2+).

The protein belongs to the DXR family. Requires Mg(2+) as cofactor. Mn(2+) is required as a cofactor.

The enzyme catalyses 2-C-methyl-D-erythritol 4-phosphate + NADP(+) = 1-deoxy-D-xylulose 5-phosphate + NADPH + H(+). It functions in the pathway isoprenoid biosynthesis; isopentenyl diphosphate biosynthesis via DXP pathway; isopentenyl diphosphate from 1-deoxy-D-xylulose 5-phosphate: step 1/6. Functionally, catalyzes the NADPH-dependent rearrangement and reduction of 1-deoxy-D-xylulose-5-phosphate (DXP) to 2-C-methyl-D-erythritol 4-phosphate (MEP). This chain is 1-deoxy-D-xylulose 5-phosphate reductoisomerase, found in Glaesserella parasuis serovar 5 (strain SH0165) (Haemophilus parasuis).